The chain runs to 265 residues: Protein N-terminal and lysine N-methyltransferase EFM7 (265 aa).

S-adenosyl-L-methionine is bound by residues Trp-55, 81–83, Asp-103, Trp-141, and Ala-169; that span reads GAA.

The protein belongs to the class I-like SAM-binding methyltransferase superfamily. EFM7 family.

It is found in the cytoplasm. In terms of biological role, S-adenosyl-L-methionine-dependent protein methyltransferase that trimethylates the N-terminal glycine 'Gly-2' of elongation factor 1-alpha, before also catalyzing the mono- and dimethylation of 'Lys-3'. The chain is Protein N-terminal and lysine N-methyltransferase EFM7 from Gibberella zeae (strain ATCC MYA-4620 / CBS 123657 / FGSC 9075 / NRRL 31084 / PH-1) (Wheat head blight fungus).